The chain runs to 286 residues: Phosphoribosylaminoimidazole-succinocarboxamide synthase (286 aa).

The protein belongs to the SAICAR synthetase family.

It carries out the reaction 5-amino-1-(5-phospho-D-ribosyl)imidazole-4-carboxylate + L-aspartate + ATP = (2S)-2-[5-amino-1-(5-phospho-beta-D-ribosyl)imidazole-4-carboxamido]succinate + ADP + phosphate + 2 H(+). Its pathway is purine metabolism; IMP biosynthesis via de novo pathway; 5-amino-1-(5-phospho-D-ribosyl)imidazole-4-carboxamide from 5-amino-1-(5-phospho-D-ribosyl)imidazole-4-carboxylate: step 1/2. This chain is Phosphoribosylaminoimidazole-succinocarboxamide synthase, found in Mannheimia succiniciproducens (strain KCTC 0769BP / MBEL55E).